The chain runs to 188 residues: MTKLIYLIGPSGAGKDSLLRAIRQLSLPHLLVAHRYITRPAEIQGENHIALTPEEFAIRQQLGIFALNWQAHQCHYGIGIEIDYWLQRGSDVIVNGSRAYLTQARERYGNTLFPICLTVSESALRQRLRARGRESEQQIAMRLQRAEEEQNRLQSDCVLLNNDGDLQHTLSTFQSLLPLDRACTAHRE.

G9 to D16 is an ATP binding site.

Belongs to the ribose 1,5-bisphosphokinase family.

The enzyme catalyses alpha-D-ribose 1,5-bisphosphate + ATP = 5-phospho-alpha-D-ribose 1-diphosphate + ADP. Its pathway is metabolic intermediate biosynthesis; 5-phospho-alpha-D-ribose 1-diphosphate biosynthesis; 5-phospho-alpha-D-ribose 1-diphosphate from D-ribose 5-phosphate (route II): step 3/3. Its function is as follows. Catalyzes the phosphorylation of ribose 1,5-bisphosphate to 5-phospho-D-ribosyl alpha-1-diphosphate (PRPP). The protein is Ribose 1,5-bisphosphate phosphokinase PhnN of Pectobacterium parmentieri (strain WPP163) (Pectobacterium wasabiae (strain WPP163)).